Consider the following 345-residue polypeptide: Probable aldo-keto reductase 3 (345 aa).

Catalysis depends on Y63, which acts as the Proton donor. A substrate-binding site is contributed by H130. NADP(+) is bound at residue 209 to 219 (SPLGRGFFASG).

This sequence belongs to the aldo/keto reductase family.

The chain is Probable aldo-keto reductase 3 from Arabidopsis thaliana (Mouse-ear cress).